The primary structure comprises 514 residues: Developmental and secondary metabolism regulator veA (514 aa).

The Velvet domain maps to 26–218 (NRHLWYQLTV…ADQGCHVRIR (193 aa)). The short motif at 40-45 (ERARAC) is the Nuclear localization signal element. The tract at residues 219 to 463 (RDVRMRKRDA…PIGSKRKHDQ (245 aa)) is disordered. A compositionally biased stretch (basic and acidic residues) spans 228–243 (AKSNNGRDRREDDMAR). The segment covering 256 to 267 (SAAARARSMSNS) has biased composition (low complexity). Residues 386–396 (SYPSTPVSSHP) show a composition bias toward polar residues. The tract at residues 411–448 (KSPSNSVSPSNSSLKITDLLVQPLPSSEPKLEVGSAPC) is PEST. Over residues 412–423 (SPSNSVSPSNSS) the composition is skewed to low complexity.

This sequence belongs to the velvet family. VeA subfamily. As to quaternary structure, component of the heterotrimeric velvet complex composed of laeA, veA and velB; VeA acting as a bridging protein between laeA and velB.

It is found in the nucleus. Its subcellular location is the cytoplasm. Its function is as follows. Component of the velvet transcription factor complex that controls sexual/asexual developmental ratio in response to light, promoting sexual development in the darkness while stimulating asexual sporulation under illumination. The velvet complex hat acts as a global regulator for secondary metabolite gene expression. Controls the expression of the cephalosporin C gene cluster. Regulates hyphal fragmentation. The sequence is that of Developmental and secondary metabolism regulator veA from Hapsidospora chrysogenum (strain ATCC 11550 / CBS 779.69 / DSM 880 / IAM 14645 / JCM 23072 / IMI 49137) (Acremonium chrysogenum).